We begin with the raw amino-acid sequence, 540 residues long: Fumonisin B1 esterase (540 aa).

S240 (acyl-ester intermediate) is an active-site residue. Catalysis depends on charge relay system residues E356 and H448. Residues 521–540 (QVGSGEGLGVSPSKACQPSK) form a disordered region.

This sequence belongs to the type-B carboxylesterase/lipase family.

It catalyses the reaction fumonisin B1 + 2 H2O = 2 tricarballylate + (2S,3S,5R,10R,12S,14S,15R,16R)-2-amino-12,16-dimethylicosane-3,5,10,14,15-pentol + 2 H(+). In terms of biological role, involved in degradation of fumonisin B1. Catalyzes the hydrolysis of fumonisin B1 (FB1) to aminopentol (HFB1). The sequence is that of Fumonisin B1 esterase (fumD) from Sphingopyxis macrogoltabida (Sphingomonas macrogoltabidus).